A 296-amino-acid chain; its full sequence is Probable 6-phosphogluconolactonase 1 (296 aa).

The protein belongs to the glucosamine/galactosamine-6-phosphate isomerase family. 6-phosphogluconolactonase subfamily.

The enzyme catalyses 6-phospho-D-glucono-1,5-lactone + H2O = 6-phospho-D-gluconate + H(+). It functions in the pathway carbohydrate degradation; pentose phosphate pathway; D-ribulose 5-phosphate from D-glucose 6-phosphate (oxidative stage): step 2/3. Functionally, hydrolysis of 6-phosphogluconolactone to 6-phosphogluconate. The chain is Probable 6-phosphogluconolactonase 1 from Oryza sativa subsp. japonica (Rice).